The following is a 379-amino-acid chain: Alanine racemase (379 aa).

K37 serves as the catalytic Proton acceptor; specific for D-alanine. K37 bears the N6-(pyridoxal phosphate)lysine mark. R137 is a substrate binding site. Y269 serves as the catalytic Proton acceptor; specific for L-alanine. Substrate is bound at residue M317.

Belongs to the alanine racemase family. It depends on pyridoxal 5'-phosphate as a cofactor.

It catalyses the reaction L-alanine = D-alanine. It participates in amino-acid biosynthesis; D-alanine biosynthesis; D-alanine from L-alanine: step 1/1. Catalyzes the interconversion of L-alanine and D-alanine. May also act on other amino acids. This is Alanine racemase (alr) from Citrifermentans bemidjiense (strain ATCC BAA-1014 / DSM 16622 / JCM 12645 / Bem) (Geobacter bemidjiensis).